Here is a 392-residue protein sequence, read N- to C-terminus: Extracellular metalloproteinase 4 (392 aa).

Positions 1–9 are excised as a propeptide; it reads VHSVVDYVS. An N-linked (GlcNAc...) asparagine glycan is attached at asparagine 176. Histidine 193 is a binding site for Zn(2+). Residue glutamate 194 is part of the active site. Histidine 197 contributes to the Zn(2+) binding site. N-linked (GlcNAc...) asparagine glycosylation is found at asparagine 359 and asparagine 385.

Belongs to the peptidase M36 family. It depends on Zn(2+) as a cofactor.

It localises to the secreted. Its function is as follows. Secreted metalloproteinase probably acting as a virulence factor. This is Extracellular metalloproteinase 4 (MEP4) from Trichophyton soudanense.